We begin with the raw amino-acid sequence, 1242 residues long: Reverse gyrase 1 (1242 aa).

The RG N-terminal-type zinc-finger motif lies at 6 to 46; sequence KVPPSIYTRSCPNCGGNISSQRLFNGSVCESCLKDDREFSN. Cys-16, Cys-19, Cys-34, and Cys-37 together coordinate Zn(2+). ATP is bound by residues Gln-93 and 110 to 117; that span reads APPGLGKT. One can recognise a Helicase ATP-binding domain in the interval 97–298; the sequence is TIRFLRGESF…SLMGFRPGSS (202 aa). The DEAD box motif lies at 214–217; that stretch reads DDVD. Residues 615–1242 form a topoisomerase I region; that stretch reads LSVKTTLFIV…ELYNEIQTIS (628 aa). Positions 619-785 constitute a Toprim domain; that stretch reads TTLFIVESPN…NIKRAEFHEV (167 aa). Glu-625 contacts Mg(2+). Residues 703–731 form an RG C-terminal-type; atypical zinc finger; that stretch reads IKKCEKGHQIVKDLSQNKCPICGSRIVTD. Residues Cys-706, His-710, Cys-721, and Cys-724 each coordinate Zn(2+). Asp-754 is a binding site for Mg(2+). One can recognise a Topo IA-type catalytic domain in the interval 801-1242; sequence NDNLVKSQIV…ELYNEIQTIS (442 aa). Tyr-965 serves as the catalytic O-(5'-phospho-DNA)-tyrosine intermediate.

The protein in the N-terminal section; belongs to the DEAD box helicase family. DDVD subfamily. It in the C-terminal section; belongs to the type IA topoisomerase family. In terms of assembly, monomer. It depends on Zn(2+) as a cofactor. Mg(2+) serves as cofactor.

It is found in the cytoplasm. It carries out the reaction ATP + H2O = ADP + phosphate + H(+). At least one of the two reverse gyrase proteins is inhibited by actinomycin D. Highly sensitive to NaCl concentrations, maximal positive supercoiling is observed with 10 mM NaCl; as NaCl rises, supercoiling decreases. At 300 mM NaCl relaxes but does not introduce positive supercoils into negatively supercoiled substrate, at 400 mM NaCl does not relax DNA. Its function is as follows. Modifies the topological state of DNA by introducing positive supercoils in an ATP-dependent process. Increases the linking number in steps of +1. Involved in homeostatic control of DNA topology in balance with type II topoisomerase 6 (TopoVI); levels of TopoVI are constant at 80 and 88 degrees Celsius and TopoVI is probably less active at 88 degrees (characterized enzyme is from S.shibatae B12), so reverse gyrase mediates most of the fine-tuning of DNA topology. Changes the DNA linking number step-by-step in a distributive manner. At low protein to DNA ratios mostly relaxes negatively supercoiled substrate, as ratios rise more positive supercoils are introduced. At 90 degrees Celsius introduces 19 positive supercoils into pTZ18R DNA (probably 2860 bp), less than TopR2. Relaxes negatively supercoiled DNA in the absence of ATP. It cleaves transiently a single DNA strand and remains covalently bound to the 5' DNA end through a tyrosine residue. May be involved in DNA damage response. Its activity is inhibited by the DNA-binding protein 7d (Sso7d), suggesting that the Sso7d activity might counteract the overwinding effect of reverse gyrase. Functionally, resolves 4-way Holliday junctions (HJ) with 20 bases in each arm in vitro, distorting the junction. Very high protein levels are required, but total enzyme content of the cell (there are 2 reverse gyrases in this organism) is estimated to be 20-200 molecules/cell. HJ resolution does not require either ATPase activity or the active tyrosine. The individual domains do not resolve HJs but do so when mixed. Also unwinds a fork substrate. In terms of biological role, there are 2 genes for this protein in the cell. During exponential growth this is the less expressed isoform (about 52 molecules per cell at 80 degrees Celsius, about 28 molecules at 88 degrees Celsius); this isoform is more active at higher temperature. Grows actively at both 80 and 88 degrees Celsius; survives a long exposure at 45 degrees Celsius without DNA replication or cell division occurring. Experiments using whole cell extracts do not distinguish which isoform is present, the results are probably a mixture of the two forms. The chain is Reverse gyrase 1 from Saccharolobus solfataricus (strain ATCC 35092 / DSM 1617 / JCM 11322 / P2) (Sulfolobus solfataricus).